Reading from the N-terminus, the 213-residue chain is Imidazole glycerol phosphate synthase subunit HisH (213 aa).

In terms of domain architecture, Glutamine amidotransferase type-1 spans 4-213 (SIAIVDYGMG…LYRNFVHWNP (210 aa)). Catalysis depends on Cys83, which acts as the Nucleophile. Active-site residues include His193 and Glu195.

As to quaternary structure, heterodimer of HisH and HisF.

It is found in the cytoplasm. The catalysed reaction is 5-[(5-phospho-1-deoxy-D-ribulos-1-ylimino)methylamino]-1-(5-phospho-beta-D-ribosyl)imidazole-4-carboxamide + L-glutamine = D-erythro-1-(imidazol-4-yl)glycerol 3-phosphate + 5-amino-1-(5-phospho-beta-D-ribosyl)imidazole-4-carboxamide + L-glutamate + H(+). The enzyme catalyses L-glutamine + H2O = L-glutamate + NH4(+). The protein operates within amino-acid biosynthesis; L-histidine biosynthesis; L-histidine from 5-phospho-alpha-D-ribose 1-diphosphate: step 5/9. Its function is as follows. IGPS catalyzes the conversion of PRFAR and glutamine to IGP, AICAR and glutamate. The HisH subunit catalyzes the hydrolysis of glutamine to glutamate and ammonia as part of the synthesis of IGP and AICAR. The resulting ammonia molecule is channeled to the active site of HisF. This is Imidazole glycerol phosphate synthase subunit HisH from Burkholderia pseudomallei (strain K96243).